The sequence spans 188 residues: dCTP deaminase (188 aa).

Residues 111 to 116, 135 to 137, Gln-156, Tyr-170, and Gln-180 each bind dCTP; these read KSTYAR and TLE. Glu-137 functions as the Proton donor/acceptor in the catalytic mechanism.

This sequence belongs to the dCTP deaminase family. In terms of assembly, homotrimer.

It catalyses the reaction dCTP + H2O + H(+) = dUTP + NH4(+). It functions in the pathway pyrimidine metabolism; dUMP biosynthesis; dUMP from dCTP (dUTP route): step 1/2. In terms of biological role, catalyzes the deamination of dCTP to dUTP. The protein is dCTP deaminase of Coxiella burnetii (strain CbuK_Q154) (Coxiella burnetii (strain Q154)).